A 338-amino-acid polypeptide reads, in one-letter code: Aspartate-semialdehyde dehydrogenase (338 aa).

NADP(+) contacts are provided by residues 13-16 (TGNV) and 41-42 (NS). Phosphate is bound at residue Arg-101. Cys-132 (acyl-thioester intermediate) is an active-site residue. Residue Gln-159 coordinates substrate. Residues 162-163 (SG) and Pro-187 contribute to the NADP(+) site. Lys-216 is a binding site for phosphate. Arg-237 serves as a coordination point for substrate. The active-site Proton acceptor is His-244. Position 317 (Asn-317) interacts with NADP(+).

Belongs to the aspartate-semialdehyde dehydrogenase family. Homodimer.

It catalyses the reaction L-aspartate 4-semialdehyde + phosphate + NADP(+) = 4-phospho-L-aspartate + NADPH + H(+). It participates in amino-acid biosynthesis; L-lysine biosynthesis via DAP pathway; (S)-tetrahydrodipicolinate from L-aspartate: step 2/4. Its pathway is amino-acid biosynthesis; L-methionine biosynthesis via de novo pathway; L-homoserine from L-aspartate: step 2/3. It functions in the pathway amino-acid biosynthesis; L-threonine biosynthesis; L-threonine from L-aspartate: step 2/5. In terms of biological role, catalyzes the NADPH-dependent formation of L-aspartate-semialdehyde (L-ASA) by the reductive dephosphorylation of L-aspartyl-4-phosphate. The sequence is that of Aspartate-semialdehyde dehydrogenase from Rickettsia typhi (strain ATCC VR-144 / Wilmington).